A 493-amino-acid polypeptide reads, in one-letter code: Cytoplasmic tRNA 2-thiolation protein 2 (493 aa).

Position 489 is a phosphoserine (Ser-489).

Belongs to the CTU2/NCS2 family. As to quaternary structure, interacts with NCS6 and URM1. May act by forming a heterodimer with NCS6.

It is found in the cytoplasm. It participates in tRNA modification; 5-methoxycarbonylmethyl-2-thiouridine-tRNA biosynthesis. Plays a central role in 2-thiolation of mcm(5)S(2)U at tRNA wobble positions of tRNA(Lys), tRNA(Glu) and tRNA(Gln). May act by forming a heterodimer with NCS6 that ligates sulfur from thiocarboxylated URM1 onto the uridine of tRNAs at wobble position. Prior mcm(5) tRNA modification by the elongator complex is required for 2-thiolation. May also be involved in protein urmylation. The sequence is that of Cytoplasmic tRNA 2-thiolation protein 2 from Saccharomyces cerevisiae (strain AWRI1631) (Baker's yeast).